We begin with the raw amino-acid sequence, 72 residues long: UPF0154 protein RBAM_017710 (72 aa).

A helical transmembrane segment spans residues 4–24 (WVGILVGVVALLIGVALGFFI).

The protein belongs to the UPF0154 family.

It is found in the cell membrane. The chain is UPF0154 protein RBAM_017710 from Bacillus velezensis (strain DSM 23117 / BGSC 10A6 / LMG 26770 / FZB42) (Bacillus amyloliquefaciens subsp. plantarum).